The primary structure comprises 60 residues: UPF0434 protein Dtpsy_1553 (60 aa).

Belongs to the UPF0434 family.

The polypeptide is UPF0434 protein Dtpsy_1553 (Acidovorax ebreus (strain TPSY) (Diaphorobacter sp. (strain TPSY))).